The chain runs to 448 residues: MSQSTATYINVIGAGLAGSEAAYQIAKRGIPVKLYEMRGVKATPQHKTTNFAELVCSNSFRGDSLTNAVGLLKEEMRRLDSIIMRNGEANRVPAGGAMAVDREGYAKSVTAELENHPLIEVIRDEITEIPNDAITVIATGPLTSDALAEKIHAVNGGDGFYFYDAAAPIIDKSTIDMSKVYLKSRYDKGEAAYLNCPMTKEEFMAFHEALTTAEEAPLNSFEKEKYFEGCMPIEVMAKRGIKTMLYGPMKPVGLEYPDDYTGPRDGEFKTPYAVVQLRQDNAAGSLYNIVGFQTHLKWGEQKRVFQMIPGLENAEFVRYGVMHRNSYMDSPNLLTETFQSRSNPNLFFAGQMTGVEGYVESAASGLVAGINAARLFKREEALIFPQTTAIGSLPHYVTHADSKHFQPMNVNFGIIKELEGPRIRDKKERYEAIASRALADLDTCLALL.

13-18 (GAGLAG) serves as a coordination point for FAD.

This sequence belongs to the MnmG family. TrmFO subfamily. Requires FAD as cofactor.

It localises to the cytoplasm. It catalyses the reaction uridine(54) in tRNA + (6R)-5,10-methylene-5,6,7,8-tetrahydrofolate + NADH + H(+) = 5-methyluridine(54) in tRNA + (6S)-5,6,7,8-tetrahydrofolate + NAD(+). The catalysed reaction is uridine(54) in tRNA + (6R)-5,10-methylene-5,6,7,8-tetrahydrofolate + NADPH + H(+) = 5-methyluridine(54) in tRNA + (6S)-5,6,7,8-tetrahydrofolate + NADP(+). Functionally, catalyzes the folate-dependent formation of 5-methyl-uridine at position 54 (M-5-U54) in all tRNAs. In Streptococcus pyogenes serotype M5 (strain Manfredo), this protein is Methylenetetrahydrofolate--tRNA-(uracil-5-)-methyltransferase TrmFO.